A 303-amino-acid polypeptide reads, in one-letter code: Ribonuclease Z (303 aa).

7 residues coordinate Zn(2+): H61, H63, D65, H66, H138, D206, and H265. Catalysis depends on D65, which acts as the Proton acceptor.

Belongs to the RNase Z family. In terms of assembly, homodimer. Requires Zn(2+) as cofactor.

It catalyses the reaction Endonucleolytic cleavage of RNA, removing extra 3' nucleotides from tRNA precursor, generating 3' termini of tRNAs. A 3'-hydroxy group is left at the tRNA terminus and a 5'-phosphoryl group is left at the trailer molecule.. Zinc phosphodiesterase, which displays some tRNA 3'-processing endonuclease activity. Probably involved in tRNA maturation, by removing a 3'-trailer from precursor tRNA. This chain is Ribonuclease Z, found in Agathobacter rectalis (strain ATCC 33656 / DSM 3377 / JCM 17463 / KCTC 5835 / VPI 0990) (Eubacterium rectale).